We begin with the raw amino-acid sequence, 350 residues long: Inner membrane protein YhiM (350 aa).

The Cytoplasmic portion of the chain corresponds to 1–2 (MN). A helical membrane pass occupies residues 3–23 (IYIGWLFKLIPLIMGLICIAL). Topologically, residues 24 to 41 (GGFVLESSGQSEYFVAGH) are periplasmic. The chain crosses the membrane as a helical span at residues 42–62 (VLISLAAICLALFTTAFIIIS). Over 63–74 (QLTRGVNTFYNT) the chain is Cytoplasmic. A helical transmembrane segment spans residues 75 to 95 (LFPIIGYAGSIITMIWGWALL). The Periplasmic portion of the chain corresponds to 96 to 104 (AGNDVMADE). A helical transmembrane segment spans residues 105-125 (FVAGHVIFGVGMIAACVSTVA). Over 126 to 157 (ASSGHFLLIPKNAAGSKSDGTPVQAYSSLIGN) the chain is Cytoplasmic. A helical transmembrane segment spans residues 158–178 (CLIAVPVLLTLLGFIWSITLL). Residues 179-190 (RSADITPHYVAG) are Periplasmic-facing. The chain crosses the membrane as a helical span at residues 191–211 (HVLLGLTAICACLIGLVATIV). The Cytoplasmic portion of the chain corresponds to 212–225 (HQTRNTFSTKEHWL). The helical transmembrane segment at 226–246 (WCYWVIFLGSITVLQGIYVLV) threads the bilayer. Over 247–257 (SSDASARLAPG) the chain is Periplasmic. A helical transmembrane segment spans residues 258–278 (IILICLGMICYSIFSKVWLLA). Residues 279–290 (LVWRRTCSLANR) are Cytoplasmic-facing. Residues 291 to 311 (IPMIPVFTCLFCLFLASFLAE) traverse the membrane as a helical segment. Over 312–324 (MAQTDMGYFIPSR) the chain is Periplasmic. The helical transmembrane segment at 325–345 (VLVGLGAVCFTLFSIVSILEA) threads the bilayer. Over 346-350 (GSAKK) the chain is Cytoplasmic.

Its subcellular location is the cell inner membrane. The protein is Inner membrane protein YhiM (yhiM) of Escherichia coli (strain K12).